The sequence spans 934 residues: MSSSHHRRSRETSHAEMPIGRYTRLDEIGRGSFATVYQGVHTKSRTYVAIKSVNLSKLNKKLKENLSSEIHILKGLYHPHIVALIDCHETTSHIHLVMEYCALGDLSLFIKRRDTLGDHRYTQDMIAKYPNPRGGALNEVVVRHFLKQLASALKFLRDRNLIHRDIKPQNLLLCPSPSSYRSGVAQVVPFKGCDESFSPATGLESLPMLKIADFGFARSLPSTSLAETLCGSPLYMAPEILRYEKYDAKADLWSVGTVLYEMVVGKPPFRATNHVELLRKIEKGEDRIKFPEENPASEQIKSLIRMLLKRNPVERMNFSDFFDCDTITGPIPGLIADDAPSTSRRSSVAVNTSGSTSRPQSRTGSRTPTGMKREKDASYPGKKDDQVSYPAAHRPPTQRSDTPPASSPMRRMGSGDRATTSKETVTTTPRRPSVVSLATAPGRQELVDRNATAAVMERQRSRNTYAGVPQTEKQAEKTKEESERAAQEIAFERDYVLVEKRAVEVNAFADELAHSPRIQGGFPRNAYALSRRPGTQGSSTATATSPLATTGKAMQVASGRARADSTHTRQGSYERRYGQSPTSAISKALHMASGRLFGMGFSPPMTITKGGRSPPLGYNPFPAYPAAQGSLMVVGDGARTNVTLDEDAKTVQVIEECATRSDVVYGFAEVKYKQLIPLAPSVQTDPSGRANVPGGERDSTDLTDGGLTVDAVVTLSEEALVLYVKALSLLAKSMDIAGAWWSRKNRGEAFGESAMGRTDATSTLVSNRINNVVQWVRNRFNEVLEKAEFVRLKLIEGQKRLPPDHPSHPSNHSVGPSVGSGASTDVVVSSGVTAEKLMYDRALEMSRAAAINELTGEELSGCEIAYVTAIRMLEAVLEEEEVSRSEPGSGTDRGDARRDGDKAMLDGVRMEDRQVVIKSSIFIVTRKQSSFVLP.

Residues 22-328 (YTRLDEIGRG…SDFFDCDTIT (307 aa)) form the Protein kinase domain. ATP-binding positions include 28-36 (IGRGSFATV) and lysine 51. Residue aspartate 165 is the Proton acceptor of the active site. Disordered regions lie at residues 335–432 (IADD…PRRP), 462–481 (RNTYAGVPQTEKQAEKTKEE), 531–580 (RRPG…YGQS), 684–703 (TDPSGRANVPGGERDSTDLT), 800–822 (RLPPDHPSHPSNHSVGPSVGSGA), and 878–900 (EEEEVSRSEPGSGTDRGDARRDG). Positions 340–368 (PSTSRRSSVAVNTSGSTSRPQSRTGSRTP) are enriched in polar residues. The span at 371-386 (MKREKDASYPGKKDDQ) shows a compositional bias: basic and acidic residues. The span at 538–550 (SSTATATSPLATT) shows a compositional bias: low complexity. The segment covering 561 to 577 (ARADSTHTRQGSYERRY) has biased composition (basic and acidic residues).

The protein belongs to the protein kinase superfamily. Ser/Thr protein kinase family. APG1/unc-51/ULK1 subfamily. Homodimer. Forms a ternary complex with ATG13 and ATG17.

The protein localises to the cytoplasm. It localises to the preautophagosomal structure membrane. The enzyme catalyses L-seryl-[protein] + ATP = O-phospho-L-seryl-[protein] + ADP + H(+). The catalysed reaction is L-threonyl-[protein] + ATP = O-phospho-L-threonyl-[protein] + ADP + H(+). Serine/threonine protein kinase involved in the cytoplasm to vacuole transport (Cvt) and found to be essential in autophagy, where it is required for the formation of autophagosomes. Involved in the clearance of protein aggregates which cannot be efficiently cleared by the proteasome. Required for selective autophagic degradation of the nucleus (nucleophagy) as well as for mitophagy which contributes to regulate mitochondrial quantity and quality by eliminating the mitochondria to a basal level to fulfill cellular energy requirements and preventing excess ROS production. Also involved in endoplasmic reticulum-specific autophagic process, in selective removal of ER-associated degradation (ERAD) substrates. Plays a key role in ATG9 and ATG23 cycling through the pre-autophagosomal structure and is necessary to promote ATG18 binding to ATG9 through phosphorylation of ATG9. Catalyzes phosphorylation of ATG4, decreasing the interaction between ATG4 and ATG8 and impairing deconjugation of PE-conjugated forms of ATG8. Required for conidiation and development of aerial hyphae. This chain is Serine/threonine-protein kinase atg1, found in Aspergillus oryzae (strain ATCC 42149 / RIB 40) (Yellow koji mold).